The primary structure comprises 488 residues: Wax ester synthase/diacylglycerol acyltransferase 8 (488 aa).

Over 1–195 (MKNEEEEPLS…AIFTIGSTMR (195 aa)) the chain is Cytoplasmic. Histidine 135 acts as the Proton acceptor in catalysis. The helical transmembrane segment at 196-214 (LIWNTLVDMFLLFATMLFL) threads the bilayer. At 215 to 488 (KDTKTPLKGG…RGLLKEAYKV (274 aa)) the chain is on the lumenal side. N-linked (GlcNAc...) asparagine glycosylation is found at asparagine 238, asparagine 252, asparagine 353, and asparagine 397.

The protein in the N-terminal section; belongs to the long-chain O-acyltransferase family. In terms of tissue distribution, mostly expressed in flowers and siliques and at low levels in stems.

It localises to the cell membrane. The protein resides in the endoplasmic reticulum membrane. It carries out the reaction an acyl-CoA + a 1,2-diacyl-sn-glycerol = a triacyl-sn-glycerol + CoA. The enzyme catalyses a long chain fatty alcohol + a fatty acyl-CoA = a wax ester + CoA. The protein operates within glycerolipid metabolism; triacylglycerol biosynthesis. It functions in the pathway lipid metabolism. Bifunctional wax ester synthase/diacylglycerol acyltransferase. Involved in cuticular wax biosynthesis. The chain is Wax ester synthase/diacylglycerol acyltransferase 8 from Arabidopsis thaliana (Mouse-ear cress).